We begin with the raw amino-acid sequence, 163 residues long: Interleukin-31 (163 aa).

The first 23 residues, Met1–Ala23, serve as a signal peptide directing secretion. N-linked (GlcNAc...) asparagine glycosylation is found at Asn55, Asn84, and Asn124.

It localises to the secreted. Activates STAT3 and possibly STAT1 and STAT5 through the IL31 heterodimeric receptor composed of IL31RA and OSMR. May function in skin immunity. Enhances myeloid progenitor cell survival in vitro. Induces RETNLA and serum amyloid A protein expression in macrophages. The chain is Interleukin-31 (Il31) from Mus musculus (Mouse).